The primary structure comprises 397 residues: Pyruvate dehydrogenase E1 component subunit alpha, mitochondrial (397 aa).

Positions 98, 124, 125, 173, 175, 204, 205, 206, 233, and 235 each coordinate pyruvate. Thiamine diphosphate-binding residues include Tyr-124, Arg-125, Gly-173, Val-175, Asp-204, Gly-205, Ala-206, and Asn-233. Asp-204 provides a ligand contact to Mg(2+). Positions 233 and 235 each coordinate Mg(2+). His-299 is a binding site for thiamine diphosphate.

Tetramer of 2 alpha and 2 beta subunits. Thiamine diphosphate serves as cofactor. It depends on Mg(2+) as a cofactor.

The protein resides in the mitochondrion matrix. It catalyses the reaction N(6)-[(R)-lipoyl]-L-lysyl-[protein] + pyruvate + H(+) = N(6)-[(R)-S(8)-acetyldihydrolipoyl]-L-lysyl-[protein] + CO2. With respect to regulation, E1 activity is regulated by phosphorylation (inactivation) and dephosphorylation (activation) of the alpha subunit. Functionally, the pyruvate dehydrogenase complex catalyzes the overall conversion of pyruvate to acetyl-CoA and CO(2). It contains multiple copies of three enzymatic components: pyruvate dehydrogenase (E1), dihydrolipoamide acetyltransferase (E2) and lipoamide dehydrogenase (E3). This Pisum sativum (Garden pea) protein is Pyruvate dehydrogenase E1 component subunit alpha, mitochondrial.